The following is a 256-amino-acid chain: Acetyl-coenzyme A carboxylase carboxyl transferase subunit alpha (256 aa).

Residues 1–236 (MSDVARILKE…KTAIVDELAE (236 aa)) enclose the CoA carboxyltransferase C-terminal domain.

Belongs to the AccA family. As to quaternary structure, acetyl-CoA carboxylase is a heterohexamer composed of biotin carboxyl carrier protein (AccB), biotin carboxylase (AccC) and two subunits each of ACCase subunit alpha (AccA) and ACCase subunit beta (AccD).

The protein resides in the cytoplasm. The enzyme catalyses N(6)-carboxybiotinyl-L-lysyl-[protein] + acetyl-CoA = N(6)-biotinyl-L-lysyl-[protein] + malonyl-CoA. The protein operates within lipid metabolism; malonyl-CoA biosynthesis; malonyl-CoA from acetyl-CoA: step 1/1. Functionally, component of the acetyl coenzyme A carboxylase (ACC) complex. First, biotin carboxylase catalyzes the carboxylation of biotin on its carrier protein (BCCP) and then the CO(2) group is transferred by the carboxyltransferase to acetyl-CoA to form malonyl-CoA. The sequence is that of Acetyl-coenzyme A carboxylase carboxyl transferase subunit alpha from Streptococcus thermophilus (strain ATCC BAA-250 / LMG 18311).